The sequence spans 624 residues: (-)-beta-phellandrene synthase 2, chloroplastic (624 aa).

Residues 1–48 (MAIVSSVPLASKSCLHKSLISSIHKLKPFCRTIPTLGMSRPGKYVMPS) constitute a chloroplast transit peptide. Mg(2+)-binding residues include aspartate 375, aspartate 379, and aspartate 527. Positions 375-379 (DDMYD) match the DDXXD motif motif.

The protein belongs to the terpene synthase family. Tpsd subfamily. It depends on Mg(2+) as a cofactor. Mn(2+) serves as cofactor.

It is found in the plastid. The protein localises to the chloroplast. It catalyses the reaction (2E)-geranyl diphosphate = (-)-beta-phellandrene + diphosphate. It functions in the pathway terpene metabolism; oleoresin biosynthesis. Its function is as follows. Terpene synthase (TPS) involved in the biosynthesis of monoterpene natural products included in conifer oleoresin secretions and volatile emissions; these compounds contribute to biotic and abiotic stress defense against herbivores and pathogens. Catalyzes the conversion of (2E)-geranyl diphosphate (GPP) to (-)-beta-phellandrene. The polypeptide is (-)-beta-phellandrene synthase 2, chloroplastic (Picea sitchensis (Sitka spruce)).